A 362-amino-acid polypeptide reads, in one-letter code: uncharacterized protein (362 aa).

This sequence belongs to the carbohydrate kinase PfkB family.

This is an uncharacterized protein from Escherichia coli (strain K12).